Consider the following 340-residue polypeptide: Uroporphyrinogen decarboxylase (340 aa).

Substrate contacts are provided by residues Arg-21–Arg-25, Phe-40, Asp-71, Tyr-146, Ser-201, and His-316.

It belongs to the uroporphyrinogen decarboxylase family. Homodimer.

It is found in the cytoplasm. It carries out the reaction uroporphyrinogen III + 4 H(+) = coproporphyrinogen III + 4 CO2. It functions in the pathway porphyrin-containing compound metabolism; protoporphyrin-IX biosynthesis; coproporphyrinogen-III from 5-aminolevulinate: step 4/4. Its function is as follows. Catalyzes the decarboxylation of four acetate groups of uroporphyrinogen-III to yield coproporphyrinogen-III. The sequence is that of Uroporphyrinogen decarboxylase from Rickettsia bellii (strain RML369-C).